Reading from the N-terminus, the 117-residue chain is Transcription elongation factor A protein-like 8 (117 aa).

A disordered region spans residues 1–81 (MQKSCDENEG…PEEVIRGVDE (81 aa)). A compositionally biased stretch (basic and acidic residues) spans 41 to 81 (NVREETDGSLRGEPAEPSPEPKEDTPARHLNPEEVIRGVDE). Residues 73 to 100 (EEVIRGVDELERLREEIRRVRNKFVLMH) adopt a coiled-coil conformation.

The protein belongs to the TFS-II family. TFA subfamily. As to expression, highly expressed in kidney. Moderately expressed in heart and lung. Low expression in brain and liver. Expression is up-regulated in nephrectomized kidney.

The protein resides in the nucleus. Its function is as follows. May be involved in transcriptional regulation. The protein is Transcription elongation factor A protein-like 8 (Tceal8) of Rattus norvegicus (Rat).